The chain runs to 371 residues: 4-hydroxy-3-methylbut-2-en-1-yl diphosphate synthase (flavodoxin) (371 aa).

Residues Cys-270, Cys-273, Cys-305, and Glu-312 each contribute to the [4Fe-4S] cluster site.

It belongs to the IspG family. [4Fe-4S] cluster serves as cofactor.

It catalyses the reaction (2E)-4-hydroxy-3-methylbut-2-enyl diphosphate + oxidized [flavodoxin] + H2O + 2 H(+) = 2-C-methyl-D-erythritol 2,4-cyclic diphosphate + reduced [flavodoxin]. It participates in isoprenoid biosynthesis; isopentenyl diphosphate biosynthesis via DXP pathway; isopentenyl diphosphate from 1-deoxy-D-xylulose 5-phosphate: step 5/6. Converts 2C-methyl-D-erythritol 2,4-cyclodiphosphate (ME-2,4cPP) into 1-hydroxy-2-methyl-2-(E)-butenyl 4-diphosphate. The protein is 4-hydroxy-3-methylbut-2-en-1-yl diphosphate synthase (flavodoxin) of Shewanella frigidimarina (strain NCIMB 400).